We begin with the raw amino-acid sequence, 119 residues long: Putative membrane protein insertion efficiency factor (119 aa).

This sequence belongs to the UPF0161 family.

The protein resides in the cell inner membrane. Could be involved in insertion of integral membrane proteins into the membrane. The polypeptide is Putative membrane protein insertion efficiency factor (Brucella anthropi (strain ATCC 49188 / DSM 6882 / CCUG 24695 / JCM 21032 / LMG 3331 / NBRC 15819 / NCTC 12168 / Alc 37) (Ochrobactrum anthropi)).